The chain runs to 734 residues: Methylcrotonoyl-CoA carboxylase subunit alpha, mitochondrial (734 aa).

The N-terminal 25 residues, 1–25 (MSMMTVWALRRNVRRKNHSMLVRYI), are a transit peptide targeting the mitochondrion. Positions 37–484 (CIEKILVANR…ETHFIEHHKS (448 aa)) constitute a Biotin carboxylation domain. Residues K152, E236, and H271 each contribute to the ATP site. An ATP-grasp domain is found at 156–354 (KRIMGAAGVP…LVEWQIRVAN (199 aa)). 3 residues coordinate Mn(2+): E311, E325, and N327. The active site involves R329. S645 is modified (phosphoserine). Residues 645–666 (SEDEEGVQHRTSSETSSHPPGT) form a disordered region. Residues 657–733 (SETSSHPPGT…SDGSALFRIK (77 aa)) enclose the Biotinyl-binding domain. The residue at position 699 (K699) is an N6-biotinyllysine.

In terms of assembly, probably a heterodimer composed of biotin-containing alpha subunits and beta subunits. Requires biotin as cofactor. Mn(2+) is required as a cofactor. In roots, cotyledons, leaves, flowers, ovaries, siliques and embryos.

The protein resides in the mitochondrion matrix. The enzyme catalyses 3-methylbut-2-enoyl-CoA + hydrogencarbonate + ATP = 3-methyl-(2E)-glutaconyl-CoA + ADP + phosphate + H(+). It functions in the pathway amino-acid degradation; L-leucine degradation; (S)-3-hydroxy-3-methylglutaryl-CoA from 3-isovaleryl-CoA: step 2/3. In terms of biological role, biotin-attachment subunit of the 3-methylcrotonyl-CoA carboxylase, an enzyme that catalyzes the conversion of 3-methylcrotonyl-CoA to 3-methylglutaconyl-CoA, a critical step for leucine and isovaleric acid catabolism. The polypeptide is Methylcrotonoyl-CoA carboxylase subunit alpha, mitochondrial (MCCA) (Arabidopsis thaliana (Mouse-ear cress)).